Here is a 758-residue protein sequence, read N- to C-terminus: Catalase-peroxidase (758 aa).

A compositionally biased stretch (polar residues) spans 1–10; sequence MSDTQDNAPA. Residues 1-59 form a disordered region; the sequence is MSDTQDNAPASAQGVDQKAAAGCPVAHDSVTAHGSESESPAIDSPTPHSGGRPRTNRDW. Positions 128-250 form a cross-link, tryptophyl-tyrosyl-methioninium (Trp-Tyr) (with M-276); the sequence is WHAAGTYRID…VGATEMGLIY (123 aa). H129 acts as the Proton acceptor in catalysis. Residues 250 to 276 constitute a cross-link (tryptophyl-tyrosyl-methioninium (Tyr-Met) (with W-128)); the sequence is YVNPEGPRGNADPAAAAHFIRETFRRM. A heme b-binding site is contributed by H291.

It belongs to the peroxidase family. Peroxidase/catalase subfamily. As to quaternary structure, homodimer or homotetramer. Heme b is required as a cofactor. Formation of the three residue Trp-Tyr-Met cross-link is important for the catalase, but not the peroxidase activity of the enzyme.

The catalysed reaction is H2O2 + AH2 = A + 2 H2O. The enzyme catalyses 2 H2O2 = O2 + 2 H2O. Functionally, bifunctional enzyme with both catalase and broad-spectrum peroxidase activity. This chain is Catalase-peroxidase, found in Salinispora arenicola (strain CNS-205).